A 502-amino-acid chain; its full sequence is Glycerol kinase (502 aa).

T13 is an ADP binding site. ATP is bound by residues T13, T14, and S15. T13 lines the sn-glycerol 3-phosphate pocket. R17 provides a ligand contact to ADP. The sn-glycerol 3-phosphate site is built by R83, E84, Y136, and D246. Positions 83, 84, 136, 246, and 247 each coordinate glycerol. ADP contacts are provided by T268 and G311. ATP-binding residues include T268, G311, Q315, and G412. Residues G412 and N416 each coordinate ADP.

This sequence belongs to the FGGY kinase family.

The enzyme catalyses glycerol + ATP = sn-glycerol 3-phosphate + ADP + H(+). The protein operates within polyol metabolism; glycerol degradation via glycerol kinase pathway; sn-glycerol 3-phosphate from glycerol: step 1/1. Its activity is regulated as follows. Inhibited by fructose 1,6-bisphosphate (FBP). In terms of biological role, key enzyme in the regulation of glycerol uptake and metabolism. Catalyzes the phosphorylation of glycerol to yield sn-glycerol 3-phosphate. The chain is Glycerol kinase from Francisella tularensis subsp. holarctica (strain FTNF002-00 / FTA).